Consider the following 582-residue polypeptide: TBCC domain-containing protein 1 (582 aa).

Residues 140 to 153 (EWPSPRSRSPSSSS) show a composition bias toward low complexity. Residues 140–159 (EWPSPRSRSPSSSSSERDAK) are disordered. Positions 305–451 (PPGSRLVLMS…LWNQPLLFGV (147 aa)) constitute a C-CAP/cofactor C-like domain. Over residues 547–558 (SLLPPTITPSSS) the composition is skewed to low complexity. Residues 547–582 (SLLPPTITPSSSAEHWSSNQNTLKEQTHEQPTGTVC) form a disordered region. The segment covering 559 to 582 (AEHWSSNQNTLKEQTHEQPTGTVC) has biased composition (polar residues).

The protein belongs to the TBCC family.

It is found in the cytoplasm. Its subcellular location is the cytoskeleton. The protein resides in the microtubule organizing center. It localises to the centrosome. The protein localises to the spindle pole. In terms of biological role, may play a role in the regulation of centrosome and Golgi apparatus positioning. The chain is TBCC domain-containing protein 1 (tbccd1) from Danio rerio (Zebrafish).